We begin with the raw amino-acid sequence, 232 residues long: Ureidoacrylate amidohydrolase RutB (232 aa).

Residue Asp26 is the Proton acceptor of the active site. Residue Lys135 is part of the active site. Catalysis depends on Cys168, which acts as the Nucleophile.

Belongs to the isochorismatase family. RutB subfamily.

It catalyses the reaction (Z)-3-ureidoacrylate + H2O + H(+) = (Z)-3-aminoacrylate + NH4(+) + CO2. It carries out the reaction (Z)-3-ureidoacrylate + H2O = (Z)-3-aminoacrylate + carbamate + H(+). The enzyme catalyses (Z)-2-methylureidoacrylate + H2O + H(+) = (Z)-2-methylaminoacrylate + NH4(+) + CO2. Hydrolyzes ureidoacrylate to form aminoacrylate and carbamate. The carbamate hydrolyzes spontaneously, thereby releasing one of the nitrogen atoms of the pyrimidine ring as ammonia and one of its carbon atoms as CO2. The sequence is that of Ureidoacrylate amidohydrolase RutB from Cronobacter turicensis (strain DSM 18703 / CCUG 55852 / LMG 23827 / z3032).